The sequence spans 440 residues: Xylose isomerase (440 aa).

Mg(2+) is bound by residues D307 and D309.

The protein belongs to the xylose isomerase family. Homotetramer. It depends on Mg(2+) as a cofactor.

The protein localises to the cytoplasm. The catalysed reaction is alpha-D-xylose = alpha-D-xylulofuranose. In Escherichia coli (strain K12 / MC4100 / BW2952), this protein is Xylose isomerase.